Consider the following 117-residue polypeptide: Large ribosomal subunit protein bL20c (117 aa).

The protein belongs to the bacterial ribosomal protein bL20 family.

The protein localises to the plastid. The protein resides in the chloroplast. Its function is as follows. Binds directly to 23S ribosomal RNA and is necessary for the in vitro assembly process of the 50S ribosomal subunit. It is not involved in the protein synthesizing functions of that subunit. The sequence is that of Large ribosomal subunit protein bL20c (rpl20) from Bigelowiella natans (Pedinomonas minutissima).